We begin with the raw amino-acid sequence, 199 residues long: Fe/S biogenesis protein NfuA (199 aa).

Residues C151 and C154 each coordinate [4Fe-4S] cluster.

The protein belongs to the NfuA family. Homodimer. Requires [4Fe-4S] cluster as cofactor.

Functionally, involved in iron-sulfur cluster biogenesis. Binds a 4Fe-4S cluster, can transfer this cluster to apoproteins, and thereby intervenes in the maturation of Fe/S proteins. Could also act as a scaffold/chaperone for damaged Fe/S proteins. This Xylella fastidiosa (strain M12) protein is Fe/S biogenesis protein NfuA.